We begin with the raw amino-acid sequence, 253 residues long: Chloride intracellular channel protein 4 (253 aa).

N-acetylalanine is present on Ala-2. The interval 2 to 101 (ALSMPLNGLK…EEFLEEVLCP (100 aa)) is required for insertion into the membrane. At Ser-4 the chain carries Phosphoserine. Lys-24 is modified (N6-acetyllysine). Residues 37-57 (FSQRLFMILWLKGVVFSVSTV) form a helical membrane-spanning segment. In terms of domain architecture, GST C-terminal spans 81–244 (NSEVKTDVNK…PSDKEVEIAY (164 aa)). Lys-130 bears the N6-acetyllysine mark. 3 positions are modified to phosphoserine: Ser-132, Ser-167, and Ser-236. Tyr-244 is subject to Phosphotyrosine.

The protein belongs to the chloride channel CLIC family. As to quaternary structure, monomer. Interacts with HRH3.

It localises to the cytoplasm. It is found in the cytoskeleton. The protein resides in the microtubule organizing center. Its subcellular location is the centrosome. The protein localises to the cytoplasmic vesicle membrane. It localises to the nucleus. It is found in the cell membrane. The protein resides in the mitochondrion. Its subcellular location is the cell junction. The enzyme catalyses chloride(in) = chloride(out). The catalysed reaction is thiocyanate(in) = thiocyanate(out). It catalyses the reaction nitrate(in) = nitrate(out). It carries out the reaction iodide(out) = iodide(in). The enzyme catalyses bromide(in) = bromide(out). The catalysed reaction is fluoride(in) = fluoride(out). It catalyses the reaction choline(out) = choline(in). In the soluble state, catalyzes glutaredoxin-like thiol disulfide exchange reactions with reduced glutathione as electron donor. Can insert into membranes and form voltage-dependent multi-ion conductive channels. Membrane insertion seems to be redox-regulated and may occur only under oxidizing conditions. Has alternate cellular functions like a potential role in angiogenesis or in maintaining apical-basolateral membrane polarity during mitosis and cytokinesis. Could also promote endothelial cell proliferation and regulate endothelial morphogenesis (tubulogenesis). Promotes cell-surface expression of HRH3. The polypeptide is Chloride intracellular channel protein 4 (CLIC4) (Pongo abelii (Sumatran orangutan)).